The following is a 144-amino-acid chain: Small ribosomal subunit protein bS6 (144 aa).

A disordered region spans residues 95–144; it reads PVTTPSPMMQDDKSKPDENSRGTAAPTVNVADDSASGAQVVAAEENDTQS. Residues 104–114 are compositionally biased toward basic and acidic residues; it reads QDDKSKPDENS.

This sequence belongs to the bacterial ribosomal protein bS6 family.

Binds together with bS18 to 16S ribosomal RNA. The sequence is that of Small ribosomal subunit protein bS6 from Nitrosomonas eutropha (strain DSM 101675 / C91 / Nm57).